We begin with the raw amino-acid sequence, 196 residues long: Pyridoxal 5'-phosphate synthase subunit PdxT (196 aa).

47–49 (GES) serves as a coordination point for L-glutamine. Cys79 functions as the Nucleophile in the catalytic mechanism. Residues Arg106 and 134–135 (IR) each bind L-glutamine. Residues His170 and Glu172 each act as charge relay system in the active site.

The protein belongs to the glutaminase PdxT/SNO family. In the presence of PdxS, forms a dodecamer of heterodimers. Only shows activity in the heterodimer.

It catalyses the reaction aldehydo-D-ribose 5-phosphate + D-glyceraldehyde 3-phosphate + L-glutamine = pyridoxal 5'-phosphate + L-glutamate + phosphate + 3 H2O + H(+). The enzyme catalyses L-glutamine + H2O = L-glutamate + NH4(+). It functions in the pathway cofactor biosynthesis; pyridoxal 5'-phosphate biosynthesis. In terms of biological role, catalyzes the hydrolysis of glutamine to glutamate and ammonia as part of the biosynthesis of pyridoxal 5'-phosphate. The resulting ammonia molecule is channeled to the active site of PdxS. This is Pyridoxal 5'-phosphate synthase subunit PdxT from Bacillus cytotoxicus (strain DSM 22905 / CIP 110041 / 391-98 / NVH 391-98).